We begin with the raw amino-acid sequence, 73 residues long: Dermaseptin-1 (73 aa).

An N-terminal signal peptide occupies residues 1 to 22 (MAFLKKSIFLALFLGMVSLSIC). Positions 23 to 43 (EEEKRENEGEEEQEDDEQSEM) are cleaved as a propeptide — removed in mature form. Residues 25 to 46 (EKRENEGEEEQEDDEQSEMKRG) are disordered. The span at 30 to 40 (EGEEEQEDDEQ) shows a compositional bias: acidic residues. Leucine 70 carries the post-translational modification Leucine amide. Positions 72–73 (EQ) are cleaved as a propeptide — removed in mature form.

As to expression, expressed by the skin glands.

It localises to the secreted. Its function is as follows. Has antiparasitic activity against trypomastigote form of T.cruzi (IC(50)=0.68 uM) in vitro but not against L.infantum. Probably acts by permeabilizing cell membranes. In vitro, shows no cytotoxicity against macrophages. Has antibacterial activity. In Pithecopus nordestinus (Northeastern Brazilian leaf frog), this protein is Dermaseptin-1.